We begin with the raw amino-acid sequence, 531 residues long: Peptide chain release factor 3 (531 aa).

Residues 13–282 (AKRRTFAIIS…TLIKYAPPPK (270 aa)) form the tr-type G domain. Residues 22-29 (SHPDAGKT), 90-94 (DTPGH), and 144-147 (NKLD) each bind GTP.

The protein belongs to the TRAFAC class translation factor GTPase superfamily. Classic translation factor GTPase family. PrfC subfamily.

It is found in the cytoplasm. Increases the formation of ribosomal termination complexes and stimulates activities of RF-1 and RF-2. It binds guanine nucleotides and has strong preference for UGA stop codons. It may interact directly with the ribosome. The stimulation of RF-1 and RF-2 is significantly reduced by GTP and GDP, but not by GMP. The sequence is that of Peptide chain release factor 3 from Psychrobacter cryohalolentis (strain ATCC BAA-1226 / DSM 17306 / VKM B-2378 / K5).